Consider the following 1026-residue polypeptide: Probable DNA-directed RNA polymerase II subunit RPB1 homolog (1026 aa).

The Zn(2+) site is built by cysteine 62, cysteine 65, cysteine 72, histidine 75, cysteine 102, cysteine 105, and cysteine 142. Positions 588, 590, and 592 each coordinate Mg(2+).

This sequence belongs to the RNA polymerase beta' chain family.

The enzyme catalyses RNA(n) + a ribonucleoside 5'-triphosphate = RNA(n+1) + diphosphate. Functionally, component of the DNA-dependent RNA polymerase that catalyzes the transcription of DNA into RNA using the four ribonucleoside triphosphates as substrates. Largest and catalytic component of RNA polymerase II which synthesizes mRNA precursors and many functional non-coding RNAs. Forms the polymerase active center together with the second largest subunit. The protein is Probable DNA-directed RNA polymerase II subunit RPB1 homolog of Acheta domesticus (House cricket).